The sequence spans 35 residues: Photosystem II reaction center protein T (35 aa).

The chain crosses the membrane as a helical span at residues 3–23 (ALVYTFLLVSTLGIIFFAIFF).

It belongs to the PsbT family. As to quaternary structure, PSII is composed of 1 copy each of membrane proteins PsbA, PsbB, PsbC, PsbD, PsbE, PsbF, PsbH, PsbI, PsbJ, PsbK, PsbL, PsbM, PsbT, PsbY, PsbZ, Psb30/Ycf12, at least 3 peripheral proteins of the oxygen-evolving complex and a large number of cofactors. It forms dimeric complexes.

The protein localises to the plastid. It is found in the chloroplast thylakoid membrane. Found at the monomer-monomer interface of the photosystem II (PS II) dimer, plays a role in assembly and dimerization of PSII. PSII is a light-driven water plastoquinone oxidoreductase, using light energy to abstract electrons from H(2)O, generating a proton gradient subsequently used for ATP formation. This Gunnera chilensis (Chilean rhubarb) protein is Photosystem II reaction center protein T.